The sequence spans 360 residues: GDP-mannose transporter (360 aa).

Topologically, residues 1–49 (MSSSETKGRNEEDVAEIKKAIATGAVKDPSNLSAIPPIFVVSGANFSMN) are cytoplasmic. The helical transmembrane segment at 50–67 (FLLLCIQSSVCCACVFAV) threads the bilayer. The Lumenal segment spans residues 68–84 (KKLGIISFRDFDMKDAK). The helical transmembrane segment at 85-105 (MWFPISFLLVSVIYTGSKSLQ) threads the bilayer. At 106 to 110 (YLSIP) the chain is on the cytoplasmic side. A helical transmembrane segment spans residues 111 to 131 (VYTIFKNLTIILIAYGEVLWF). The Lumenal segment spans residues 132-134 (GGR). The chain crosses the membrane as a helical span at residues 135–155 (VTALTFVSFIFMVISSIIAAW). Over 156 to 164 (SDVQSALAS) the chain is Cytoplasmic. Residues 165–185 (SIPGASSGVSVGAMQSLFGAL) form a helical membrane-spanning segment. Position 186 (R186) is a topological domain, lumenal. A helical transmembrane segment spans residues 187-207 (GLNVGYFWMLVNCLTSAAYVL). Residues 208-220 (SMRKRIKSTGFSD) lie on the Cytoplasmic side of the membrane. The helical transmembrane segment at 221 to 241 (WDTMFYNNLLSIPVLAVFSLI) threads the bilayer. Residues 242–260 (AEDWGRENLNRNFPAETRN) lie on the Lumenal side of the membrane. Residues 261 to 281 (FLLFAIAFSGAAAVGISYTTA) traverse the membrane as a helical segment. The Cytoplasmic segment spans residues 282–291 (WCVRVTSSTT). A helical transmembrane segment spans residues 292 to 312 (YSMVGALNKLPVAASGMLFFG). Residues 313–314 (DP) lie on the Lumenal side of the membrane. A helical membrane pass occupies residues 315-335 (VTVGSVSAVGVGFFAGIVYAV). The Cytoplasmic portion of the chain corresponds to 336–360 (AKNNQKKNERRQAADAIIPMASRKP).

It belongs to the TPT transporter family. SLC35D subfamily. Homooligomer.

It localises to the golgi apparatus membrane. It is found in the cytoplasmic vesicle membrane. Its subcellular location is the endoplasmic reticulum membrane. Functionally, involved in the import of GDP-mannose from the cytoplasm into the Golgi lumen. The protein is GDP-mannose transporter (VRG4) of Coprinopsis cinerea (strain Okayama-7 / 130 / ATCC MYA-4618 / FGSC 9003) (Inky cap fungus).